The following is a 190-amino-acid chain: Calcium-binding protein NCS-1 (190 aa).

Glycine 2 carries the N-myristoyl glycine lipid modification. EF-hand domains are found at residues 40 to 58, 60 to 95, 96 to 131, and 144 to 179; these read SGHL…FFPF, DPSA…TSRG, ELND…IYKM, and TPEK…DPTI. Positions 73, 75, 77, 79, 84, 109, 111, 113, 120, 157, 159, 161, 163, and 168 each coordinate Ca(2+).

It belongs to the recoverin family.

The protein localises to the membrane. In terms of biological role, negatively regulates sporulation perhaps by controlling Ca(2+)-dependent desensitization of git3. The protein is Calcium-binding protein NCS-1 (ncs1) of Schizosaccharomyces pombe (strain 972 / ATCC 24843) (Fission yeast).